The sequence spans 1971 residues: Germinal-center associated nuclear protein (1971 aa).

2 disordered regions span residues 1 to 50 and 214 to 406; these read MHPV…KSLA and PAFA…RGKS. Positions 8 to 29 are enriched in polar residues; it reads GGQQPSAFAVSSSTTGTYQTKS. Residue R32 is modified to Asymmetric dimethylarginine. An FG-repeats region spans residues 33–335; that stretch reads FGQPSLFGQN…RPRGGTLFGR (303 aa). 2 stretches are compositionally biased toward polar residues: residues 38 to 50 and 214 to 224; these read LFGQ…KSLA and PAFASPLSNQN. Over residues 232-253 the composition is skewed to low complexity; sequence STSAFGSSNSSFSTFPTASPGS. 2 stretches are compositionally biased toward basic and acidic residues: residues 288–321 and 342–359; these read RKED…DKRP and KSNK…KESG. The segment at 414–550 is DNA primase; sequence EEWIYSLGGV…AAGSLLSKSS (137 aa). S424 carries the phosphoserine modification. K483 and K484 each carry N6-acetyllysine. Residues S502, S531, and S550 each carry the phosphoserine modification. The region spanning 768–951 is the PCI domain; the sequence is NNENMTKCLQ…RKSVFIGRKL (184 aa). Positions 1124 to 1162 form a coiled coil; sequence HVAAEEVSMERQRLEEEKQRAEEERLKQERELMLTQLSE. Residues 1793–1840 are disordered; the sequence is RELQLSHGRSGMRSIHPPTSTFPTPLLHVHQKGKKKEESGREGSLSTE.

Belongs to the SAC3 family. As to quaternary structure, component of the nuclear pore complex (NPC)-associated TREX-2 complex (transcription and export complex 2), composed of at least GANP, 2 copies of ENY2, PCID2, SEM1/DSS1, and either centrin CETN2 or centrin CETN3. The TREX-2 complex also associates with ALYREF/ALY. Interacts with RNA polymerase II subunit POLR2A and with the transcription elongation factor SUPT5H/SPT5. Interacts (via FG-repeats) with NXF1; this interaction is not mediated by RNA. Interacts with nuclear envelope proteins NUP62, NUP153 and RANBP2/NUP358; interaction with NUP153 is required for full localization at the nuclear pore complex. Interacts with several RNA helicases, including DHX9, DDX21, and DDX39A/DDX39, and with DNA topoisomerase TOP2A. Directly interacts with AICDA/AID. Interacts with the glucocorticoid receptor NR3C1. Interacts with MCM3. Phosphorylation at Ser-502 is induced in B-cells by CD40-stimulation, but not by bacterial lipopolysaccharide (LPS). As to expression, expressed at low levels in lymphoid organs, including thymus, spleen and lymph nodes. Up-regulated in stimulated B-cells in spleen and Peyer's patch germinal centers (at protein level).

The protein localises to the cytoplasm. It is found in the nucleus. It localises to the nucleus envelope. The protein resides in the nuclear pore complex. Its subcellular location is the nucleoplasm. The protein localises to the chromosome. The catalysed reaction is L-lysyl-[histone] + acetyl-CoA = N(6)-acetyl-L-lysyl-[histone] + CoA + H(+). Functionally, as a component of the TREX-2 complex, involved in the export of mRNAs to the cytoplasm through the nuclear pores. Through the acetylation of histones, affects the assembly of nucleosomes at immunoglobulin variable region genes and promotes the recruitment and positioning of transcription complex to favor DNA cytosine deaminase AICDA/AID targeting, hence promoting somatic hypermutations. The sequence is that of Germinal-center associated nuclear protein (Mcm3ap) from Mus musculus (Mouse).